A 200-amino-acid polypeptide reads, in one-letter code: ATP synthase subunit s, mitochondrial (200 aa).

Residues 1 to 25 constitute a mitochondrion transit peptide; that stretch reads MMMFGKISRQLFSLKKIPWSCDSRY. An N-terminal domain region spans residues 1–61; it reads MMMFGKISRQ…SEWLLRCGAK (61 aa). G59 serves as a coordination point for Mg(2+). LRR repeat units follow at residues 62–87, 88–116, 117–141, and 142–173; these read VRYC…RYKI, QAID…RITL, CRCH…KSLL, and ELEI…LSDL. T93 contacts Mg(2+).

This sequence belongs to the ATP synthase subunit s family. As to quaternary structure, homotetramer. Associates with ATP synthase.

Its subcellular location is the mitochondrion. The protein localises to the mitochondrion inner membrane. In terms of biological role, involved in regulation of mitochondrial membrane ATP synthase. Necessary for H(+) conduction of ATP synthase. Facilitates energy-driven catalysis of ATP synthesis by blocking a proton leak through an alternative proton exit pathway. The protein is ATP synthase subunit s, mitochondrial of Rattus norvegicus (Rat).